Here is a 93-residue protein sequence, read N- to C-terminus: LSM complex subunit lsm3 (93 aa).

Positions 9–93 (EPLDLVRLSL…SVILIAPPRN (85 aa)) constitute a Sm domain. The residue at position 84 (S84) is a Phosphoserine.

It belongs to the snRNP Sm proteins family. In terms of assembly, component of the heptameric LSM1-LSM7 complex that forms a seven-membered ring structure with a donut shape. The LSm subunits are arranged in the order lsm1, lsm2, lsm3, lsm6, lsm5, lsm7 and lsm4. Component of the heptameric LSM2-LSM8 complex that forms a seven-membered ring structure with a donut shape. The LSm subunits are arranged in the order lsm8, lsm2, lsm3, lsm6, lsm5, lsm7 and lsm4.

The protein resides in the nucleus. Its subcellular location is the cytoplasm. In terms of biological role, component of LSm protein complexes, which are involved in RNA processing and may function in a chaperone-like manner. Component of the cytoplasmic LSM1-LSM7 complex which is involved in mRNA degradation by activating the decapping step. The LSM1-LSM7 complex loads onto the 3'-end of single stranded RNA. Component of the nuclear LSM2-LSM8 complex, which is involved in spliceosome assembly. The LSM2-LSM8 complex plays a role in the biogenesis of the spliceosomal U4/U6-U5 tri-snRNP complex by accelerating prp24-mediated annealing of U4/U6 di-snRNA. The LSM2-LSM8 complex binds U6 snRNA terminating with a cyclic 2',3' phosphate group; RNA with an unmodified 3' hydroxyl or non-cyclic 3' phosphate is bound less tightly. In Schizosaccharomyces pombe (strain 972 / ATCC 24843) (Fission yeast), this protein is LSM complex subunit lsm3 (lsm3).